The sequence spans 57 residues: Small ribosomal subunit protein bS21 (57 aa).

This sequence belongs to the bacterial ribosomal protein bS21 family.

The polypeptide is Small ribosomal subunit protein bS21 (Bacillus anthracis (strain A0248)).